We begin with the raw amino-acid sequence, 278 residues long: 4-deoxy-L-threo-5-hexosulose-uronate ketol-isomerase (278 aa).

Positions 196, 198, 203, and 245 each coordinate Zn(2+).

This sequence belongs to the KduI family. As to quaternary structure, homohexamer. The cofactor is Zn(2+).

The enzyme catalyses 5-dehydro-4-deoxy-D-glucuronate = 3-deoxy-D-glycero-2,5-hexodiulosonate. It functions in the pathway glycan metabolism; pectin degradation; 2-dehydro-3-deoxy-D-gluconate from pectin: step 4/5. Its function is as follows. Catalyzes the isomerization of 5-dehydro-4-deoxy-D-glucuronate to 3-deoxy-D-glycero-2,5-hexodiulosonate. The protein is 4-deoxy-L-threo-5-hexosulose-uronate ketol-isomerase of Escherichia coli O127:H6 (strain E2348/69 / EPEC).